The sequence spans 156 residues: Small ribosomal subunit protein uS7 (156 aa).

The protein belongs to the universal ribosomal protein uS7 family. As to quaternary structure, part of the 30S ribosomal subunit. Contacts proteins S9 and S11.

In terms of biological role, one of the primary rRNA binding proteins, it binds directly to 16S rRNA where it nucleates assembly of the head domain of the 30S subunit. Is located at the subunit interface close to the decoding center, probably blocks exit of the E-site tRNA. The protein is Small ribosomal subunit protein uS7 of Rhodospirillum rubrum (strain ATCC 11170 / ATH 1.1.1 / DSM 467 / LMG 4362 / NCIMB 8255 / S1).